The following is a 387-amino-acid chain: BarH-like 2 homeobox protein (387 aa).

3 disordered regions span residues 1–145 (MTME…FLIK), 157–240 (CAPY…TAFS), and 367–387 (PGGQPALNPLSSPIPGTPHPR). Residues 7 to 24 (SGSSFGIDTILSSASSGS) are compositionally biased toward polar residues. The span at 100-113 (APTQSLQPLPQQQQ) shows a compositional bias: low complexity. Over residues 114–126 (PLPPQQPPPPPPQ) the composition is skewed to pro residues. Low complexity predominate over residues 127 to 141 (QLGSAASAPRTSTSS). Over residues 160–178 (YSTSVSSPHHTPKQESNAV) the composition is skewed to polar residues. Over residues 180-220 (ESFRPKLEQEDSKTKLDKREDSQSDIKCHGTKEEGDREITS) the composition is skewed to basic and acidic residues. Residues 232–291 (PRKARTAFSDHQLNQLERSFERQKYLSVQDRMDLAAALNLTDTQVKTWYQNRRTKWKRQT) constitute a DNA-binding region (homeobox).

This sequence belongs to the BAR homeobox family.

The protein resides in the nucleus. In terms of biological role, potential regulator of neural basic helix-loop-helix genes. The chain is BarH-like 2 homeobox protein (BARHL2) from Homo sapiens (Human).